Reading from the N-terminus, the 561-residue chain is Putative transport protein YbjL (561 aa).

Helical transmembrane passes span 8–28 (LLNG…LCLG), 32–52 (LGSV…LLGQ), 66–86 (FMLF…SIFF), 94–114 (MLAL…GKLF), and 158–178 (NLSL…IVGA). RCK C-terminal domains are found at residues 200-288 (RGLD…SFRN) and 292-373 (VFDR…RIGF). 5 helical membrane-spanning segments follow: residues 383 to 403 (LLAF…TFQF), 406 to 426 (FSFG…LGFL), 447 to 467 (FGLM…ISNG), 475 to 495 (MLIA…LFGA), and 540 to 560 (AIAN…WPGL).

This sequence belongs to the AAE transporter (TC 2.A.81) family. YbjL subfamily.

It localises to the cell membrane. This Salmonella agona (strain SL483) protein is Putative transport protein YbjL.